A 440-amino-acid polypeptide reads, in one-letter code: Protein scalloped (440 aa).

A disordered region spans residues 32–65; it reads TEQQAVGPGTIPSPWTPVNAGPPGALGSADTNGS. Residues 86–162 constitute a DNA-binding region (TEA); that stretch reads SADAEGVWSP…QVLARRKLRE (77 aa).

The C-terminus of sd interacts with the C-terminal serine-rich protein domain of vg, to form a complex which acts as a selector for wing development. Interacts (via C-terminus) with yki (via N-terminus) and this interaction enhances its transcriptional activity. In terms of tissue distribution, subset of neuroblasts in the central nervous system and in the peripheral sense organs of the embryo. Expressed in the developing wing primordia initially along the D/V wing boundary, and by the late third larval instar, maximal expression is seen in cells at the D/V wing disk boundary. Less expression in cells located farther from this boundary. Also expressed in wing progenitor cells.

It localises to the nucleus. Its function is as follows. Transcription factor which plays a key role in the Hippo/SWH (Sav/Wts/Hpo) signaling pathway, a signaling pathway that plays a pivotal role in organ size control and tumor suppression by restricting proliferation and promoting apoptosis. The core of this pathway is composed of a kinase cascade wherein Hippo (Hpo), in complex with its regulatory protein Salvador (Sav), phosphorylates and activates Warts (Wts) in complex with its regulatory protein Mats, which in turn phosphorylates and inactivates the Yorkie (Yki) oncoprotein. The Hippo/SWH signaling pathway inhibits the activity of the transcriptional complex formed by Scalloped (sd) and Yki and the target genes of this pathway include cyclin-E (cycE), diap1 and bantam. Sd promotes nuclear localization of Yki. Involved in the regulation of cell-specific gene expression during development, particularly in the differentiation of the nervous system. When in combination with vestigial (vg) it acts as a transcriptional activation complex that regulates gene expression in the wing. Binding to vg switches the DNA target selectivity of sd. Required autonomously for cell proliferation and viability within the wing blade. Required for proper sensory organ precursor (SOP) differentiation at the wing margin; required for correct expression of sens. The chain is Protein scalloped (sd) from Drosophila melanogaster (Fruit fly).